A 418-amino-acid chain; its full sequence is Glutamyl-tRNA reductase (418 aa).

Substrate is bound by residues 49 to 52 (TCNR), S109, 114 to 116 (EPQ), and Q120. C50 (nucleophile) is an active-site residue. 189 to 194 (GAGETI) serves as a coordination point for NADP(+).

The protein belongs to the glutamyl-tRNA reductase family. Homodimer.

It carries out the reaction (S)-4-amino-5-oxopentanoate + tRNA(Glu) + NADP(+) = L-glutamyl-tRNA(Glu) + NADPH + H(+). Its pathway is porphyrin-containing compound metabolism; protoporphyrin-IX biosynthesis; 5-aminolevulinate from L-glutamyl-tRNA(Glu): step 1/2. Catalyzes the NADPH-dependent reduction of glutamyl-tRNA(Glu) to glutamate 1-semialdehyde (GSA). The sequence is that of Glutamyl-tRNA reductase from Erwinia tasmaniensis (strain DSM 17950 / CFBP 7177 / CIP 109463 / NCPPB 4357 / Et1/99).